The following is a 292-amino-acid chain: Putative xanthine dehydrogenase FAD-binding subunit XdhB (292 aa).

The FAD-binding PCMH-type domain occupies 1–176 (MFDFASYHRA…VAFHFPPQPK (176 aa)). FAD contacts are provided by residues 27 to 34 (KLLAGGTD), 109 to 113 (ATYGG), Ile-165, and Phe-184.

In terms of assembly, heterotrimer of XdhA, XdhB and XdhC. It depends on FAD as a cofactor.

It catalyses the reaction xanthine + NAD(+) + H2O = urate + NADH + H(+). The catalysed reaction is hypoxanthine + NAD(+) + H2O = xanthine + NADH + H(+). Its pathway is purine metabolism; hypoxanthine degradation; urate from hypoxanthine: step 1/2. It participates in purine metabolism; hypoxanthine degradation; urate from hypoxanthine: step 2/2. Its function is as follows. Presumed to be a dehydrogenase, but possibly an oxidase. Participates in limited purine salvage (requires aspartate) but does not support aerobic growth on purines as the sole carbon source (purine catabolism). This Escherichia coli (strain K12) protein is Putative xanthine dehydrogenase FAD-binding subunit XdhB (xdhB).